The primary structure comprises 152 residues: Transcriptional regulator MraZ (152 aa).

2 SpoVT-AbrB domains span residues 5–52 (ASAI…PFDE) and 81–124 (AHEC…DETA).

The protein belongs to the MraZ family. Forms oligomers.

The protein resides in the cytoplasm. It localises to the nucleoid. The protein is Transcriptional regulator MraZ of Shewanella sediminis (strain HAW-EB3).